We begin with the raw amino-acid sequence, 165 residues long: 3-isopropylmalate dehydratase small subunit (165 aa).

This sequence belongs to the LeuD family. LeuD type 2 subfamily. In terms of assembly, heterodimer of LeuC and LeuD.

The enzyme catalyses (2R,3S)-3-isopropylmalate = (2S)-2-isopropylmalate. The protein operates within amino-acid biosynthesis; L-leucine biosynthesis; L-leucine from 3-methyl-2-oxobutanoate: step 2/4. In terms of biological role, catalyzes the isomerization between 2-isopropylmalate and 3-isopropylmalate, via the formation of 2-isopropylmaleate. The polypeptide is 3-isopropylmalate dehydratase small subunit (Halothermothrix orenii (strain H 168 / OCM 544 / DSM 9562)).